The chain runs to 397 residues: 3-ketoacyl-CoA thiolase, mitochondrial (397 aa).

A mitochondrion; not cleaved-targeting transit peptide spans 1–16 (MALLRGVFIVAAKRTP). Lys-25 is modified (N6-acetyllysine; alternate). Lys-25 is subject to N6-succinyllysine; alternate. N6-succinyllysine is present on Lys-45. The active-site Acyl-thioester intermediate is the Cys-92. Residue Thr-119 is modified to Phosphothreonine. Position 121 is a phosphoserine (Ser-121). At Tyr-127 the chain carries Phosphotyrosine. Thr-136 bears the Phosphothreonine mark. An N6-acetyllysine; alternate mark is found at Lys-137, Lys-143, Lys-158, Lys-171, Lys-191, and Lys-209. N6-succinyllysine; alternate occurs at positions 137, 143, 158, 171, 191, and 209. N6-succinyllysine is present on residues Lys-211, Lys-212, and Lys-214. Arg-224 and Thr-227 together coordinate CoA. N6-succinyllysine is present on Lys-240. Lys-241 carries the N6-acetyllysine modification. Ser-251 is a CoA binding site. N6-acetyllysine occurs at positions 269 and 270. Lys-305 is modified (N6-acetyllysine; alternate). Position 305 is an N6-succinyllysine; alternate (Lys-305). Ser-310 bears the Phosphoserine mark. The residue at position 312 (Lys-312) is an N6-acetyllysine; alternate. Lys-312 carries the post-translational modification N6-succinyllysine; alternate. Phosphoserine is present on Ser-333. Lys-340 is subject to N6-acetyllysine. A Phosphoserine modification is found at Ser-344. Position 375 is an N6-acetyllysine (Lys-375). Cys-382 acts as the Proton donor/acceptor in catalysis.

Belongs to the thiolase-like superfamily. Thiolase family. As to quaternary structure, homotetramer. Interacts with BNIP3. As to expression, expressed in liver, brown adipose tissue and heart (at protein level).

The protein localises to the mitochondrion. It catalyses the reaction an acyl-CoA + acetyl-CoA = a 3-oxoacyl-CoA + CoA. It carries out the reaction 2 acetyl-CoA = acetoacetyl-CoA + CoA. The enzyme catalyses acetyl-CoA + H2O = acetate + CoA + H(+). The catalysed reaction is propanoyl-CoA + H2O = propanoate + CoA + H(+). It catalyses the reaction butanoyl-CoA + H2O = butanoate + CoA + H(+). It carries out the reaction hexanoyl-CoA + H2O = hexanoate + CoA + H(+). The enzyme catalyses octanoyl-CoA + H2O = octanoate + CoA + H(+). The catalysed reaction is decanoyl-CoA + H2O = decanoate + CoA + H(+). It catalyses the reaction dodecanoyl-CoA + H2O = dodecanoate + CoA + H(+). It carries out the reaction tetradecanoyl-CoA + H2O = tetradecanoate + CoA + H(+). The enzyme catalyses hexadecanoyl-CoA + H2O = hexadecanoate + CoA + H(+). It functions in the pathway lipid metabolism; fatty acid beta-oxidation. With respect to regulation, the 3-oxoacetyl-CoA thiolase activity is inhibited by acetyl-CoA while the acetyl-CoA hydrolase activity is inhibited by acetoacetyl-CoA. Functionally, in the production of energy from fats, this is one of the enzymes that catalyzes the last step of the mitochondrial beta-oxidation pathway, an aerobic process breaking down fatty acids into acetyl-CoA. Using free coenzyme A/CoA, catalyzes the thiolytic cleavage of medium- to long-chain unbranched 3-oxoacyl-CoAs into acetyl-CoA and a fatty acyl-CoA shortened by two carbon atoms. Also catalyzes the condensation of two acetyl-CoA molecules into acetoacetyl-CoA and could be involved in the production of ketone bodies. Also displays hydrolase activity on various fatty acyl-CoAs. Thereby, could be responsible for the production of acetate in a side reaction to beta-oxidation. Abolishes BNIP3-mediated apoptosis and mitochondrial damage. In Rattus norvegicus (Rat), this protein is 3-ketoacyl-CoA thiolase, mitochondrial (Acaa2).